Here is a 795-residue protein sequence, read N- to C-terminus: Volume-regulated anion channel subunit LRRC8E (795 aa).

The Cytoplasmic segment spans residues Met-1 to Pro-22. A helical transmembrane segment spans residues Trp-23 to Cys-43. The Extracellular portion of the chain corresponds to Thr-44–Lys-116. Cys-54 and Cys-300 are oxidised to a cystine. Residue Asn-63 is glycosylated (N-linked (GlcNAc...) asparagine). A helical transmembrane segment spans residues Tyr-117 to Phe-137. Residues Lys-138–Lys-264 lie on the Cytoplasmic side of the membrane. A helical transmembrane segment spans residues Phe-265 to Cys-285. The Extracellular segment spans residues Arg-286–Ala-312. The N-linked (GlcNAc...) asparagine glycan is linked to Asn-301. A helical membrane pass occupies residues Phe-313–Leu-333. Residues Phe-334–Glu-795 lie on the Cytoplasmic side of the membrane. LRR repeat units follow at residues Gln-535–Ala-556, His-558–Lys-578, Val-582–Leu-603, Ala-605–Gln-626, Lys-630–Leu-651, Ser-653–Cys-674, Gly-676–Leu-697, Ser-699–Cys-720, Lys-722–Gln-744, and Ala-745–Cys-766.

This sequence belongs to the LRRC8 family. As to quaternary structure, heterohexamer; oligomerizes with other LRRC8 proteins (LRRC8A, LRRC8C, LRRC8D and/or LRRC8B) to form a heterohexamer. In vivo, the subunit composition may depend primarily on expression levels, and heterooligomeric channels containing various proportions of the different LRRC8 proteins may coexist.

It localises to the cell membrane. It is found in the endoplasmic reticulum membrane. The protein localises to the lysosome membrane. It carries out the reaction chloride(in) = chloride(out). The enzyme catalyses iodide(out) = iodide(in). It catalyses the reaction taurine(out) = taurine(in). The catalysed reaction is 2',3'-cGAMP(out) = 2',3'-cGAMP(in). Non-essential component of the volume-regulated anion channel (VRAC, also named VSOAC channel), an anion channel required to maintain a constant cell volume in response to extracellular or intracellular osmotic changes. The VRAC channel conducts iodide better than chloride and can also conduct organic osmolytes like taurine. Mediates efflux of amino acids, such as aspartate, in response to osmotic stress. The VRAC channel also mediates transport of immunoreactive cyclic dinucleotide GMP-AMP (2'-3'-cGAMP), an immune messenger produced in response to DNA virus in the cytosol. Channel activity requires LRRC8A plus at least one other family member (LRRC8B, LRRC8C, LRRC8D or LRRC8E); channel characteristics depend on the precise subunit composition. Also plays a role in lysosome homeostasis by forming functional lysosomal VRAC channels in response to low cytoplasmic ionic strength condition: lysosomal VRAC channels are necessary for the formation of large lysosome-derived vacuoles, which store and then expel excess water to maintain cytosolic water homeostasis. The protein is Volume-regulated anion channel subunit LRRC8E of Mus musculus (Mouse).